The sequence spans 260 residues: Vesicle-associated membrane protein 7B (260 aa).

The Cytoplasmic segment spans residues 1 to 189 (MPIIYSLVAR…KCAMWWKNVK (189 aa)). One can recognise a Longin domain in the interval 7-110 (LVARGSSVLA…GMNSDFSRTL (104 aa)). In terms of domain architecture, v-SNARE coiled-coil homology spans 125 to 186 (TMSRTMAEID…KQLKCAMWWK (62 aa)). Residues 190-210 (LMLVLGAIVLIIIFIIVMSYC) form a helical; Anchor for type IV membrane protein membrane-spanning segment. Residues 211–260 (DGFRSGSKCRSSPSSNSTPTPTPTETPTPTPTPTSTPTPSQLLETLLNQF) lie on the Vesicular side of the membrane. Positions 215–250 (SGSKCRSSPSSNSTPTPTPTETPTPTPTPTSTPTPS) are disordered. Over residues 230-246 (TPTPTETPTPTPTPTST) the composition is skewed to pro residues.

It belongs to the synaptobrevin family.

It localises to the cytoplasmic vesicle. The protein localises to the secretory vesicle membrane. Its subcellular location is the golgi apparatus. The protein resides in the trans-Golgi network membrane. It is found in the late endosome membrane. It localises to the lysosome membrane. The protein localises to the endoplasmic reticulum membrane. Its subcellular location is the phagosome membrane. Its function is as follows. Involved in the targeting and/or fusion of transport vesicles to their target membrane during transport of proteins from the early endosome to the lysosome. Required for heterotypic fusion of late endosomes with lysosomes and homotypic lysosomal fusion. In Dictyostelium discoideum (Social amoeba), this protein is Vesicle-associated membrane protein 7B.